We begin with the raw amino-acid sequence, 35 residues long: Natriuretic peptide TNPb (35 aa).

Cys9 and Cys25 are oxidised to a cystine.

In terms of tissue distribution, expressed by the venom gland.

The protein localises to the secreted. In terms of biological role, snake venom natriuretic peptide that exhibits vasoactive and probable hypotensive activity. Is only weakly active on natriuretic peptide receptor-C (NPR3). Stimulates cGMP production through the natriuretic peptide receptor 1 (NPR1) with moderate potencies for the rat NPR1 (EC(50)=1200 nM), and very weak potencies over human NPR1 (30% activation at 10 uM). In vivo, does not impact systolic and diastolic blood pressure, as well as heart rate, when intravenously injected in conscious rabbits. Does not affect the bradycardia due to cardiac afferent stimulation (Bezold-Jarisch reflex). The protein is Natriuretic peptide TNPb of Oxyuranus microlepidotus (Inland taipan).